An 827-amino-acid polypeptide reads, in one-letter code: Probable beta-glucosidase H (827 aa).

Asp-223 is a catalytic residue. Residues 387-546 (RLLTNAVMHF…DSAEMVRSAV (160 aa)) enclose the PA14 domain. N-linked (GlcNAc...) asparagine glycosylation is found at Asn-471, Asn-594, Asn-600, and Asn-625.

Belongs to the glycosyl hydrolase 3 family.

The protein resides in the secreted. The enzyme catalyses Hydrolysis of terminal, non-reducing beta-D-glucosyl residues with release of beta-D-glucose.. The protein operates within glycan metabolism; cellulose degradation. Its function is as follows. Beta-glucosidases are one of a number of cellulolytic enzymes involved in the degradation of cellulosic biomass. Catalyzes the last step releasing glucose from the inhibitory cellobiose. This chain is Probable beta-glucosidase H (bglH), found in Aspergillus flavus (strain ATCC 200026 / FGSC A1120 / IAM 13836 / NRRL 3357 / JCM 12722 / SRRC 167).